The primary structure comprises 428 residues: MILIQDATINNKVQDILIEKNKIKKIGKNLIQKENLNRKDLKIIDGKNKIIIPGLVNTHTHTPMTLFRGVADDLPLMDWLNNYIWKMEANLNEKIVYDATMLGCMEMIKSGTTTFNDMYFYMNGIIKGVQETGIRAYLGYGMIDLFDEEKRENELKETVNTVENIQKLNNPKINPTVSPHAPYTCSMELLQESHNLAKKYNVPLHIHLNETIDEIKTVEEMTNKRPFEYLDSFGFFNGVKVISAHNVHLSNKEIEIIKNKNIAISHNPISNLKLASGIAPIPKLMENTVLITLGTDGCGSNNNLNLFEEIKMASLIHKGNSLNPTVVSASQSFEFATKNGANALGLNAGELVEGALADVVIIDINKPYLIPNENIYSHLVYSFNGVVDMVIIDGEIVLNNGKMVNINEEKVYENAEKSYNKLLNNSDE.

2 residues coordinate Zn(2+): H59 and H61. The substrate site is built by E88 and H180. Residue H207 participates in Zn(2+) binding. Substrate contacts are provided by E210 and D296. D296 lines the Zn(2+) pocket.

The protein belongs to the metallo-dependent hydrolases superfamily. MTA/SAH deaminase family. Homotetramer. Zn(2+) is required as a cofactor.

The enzyme catalyses 5'-deoxyadenosine + H2O + H(+) = 5'-deoxyinosine + NH4(+). It carries out the reaction S-adenosyl-L-homocysteine + H2O + H(+) = S-inosyl-L-homocysteine + NH4(+). It catalyses the reaction S-methyl-5'-thioadenosine + H2O + H(+) = S-methyl-5'-thioinosine + NH4(+). The catalysed reaction is adenosine + H2O + H(+) = inosine + NH4(+). It functions in the pathway amino-acid biosynthesis; S-adenosyl-L-methionine biosynthesis. Catalyzes the deamination of three SAM-derived enzymatic products, namely 5'-deoxyadenosine, S-adenosyl-L-homocysteine, and 5'-methylthioadenosine, to produce the inosine analogs. Can also deaminate adenosine. The preferred substrate for this enzyme is 5'-deoxyadenosine, but all these substrates are efficiently deaminated. Likely functions in a S-adenosyl-L-methionine (SAM) recycling pathway from S-adenosyl-L-homocysteine (SAH) produced from SAM-dependent methylation reactions. May also be involved in the recycling of 5'-deoxyadenosine, whereupon the 5'-deoxyribose moiety of 5'-deoxyinosine is further metabolized to deoxyhexoses used for the biosynthesis of aromatic amino acids in methanogens. The polypeptide is 5'-deoxyadenosine deaminase (Methanococcus aeolicus (strain ATCC BAA-1280 / DSM 17508 / OCM 812 / Nankai-3)).